We begin with the raw amino-acid sequence, 620 residues long: MSFDIAKYPTLALVDSTQELRLLPKESLPKLCDELRRYLLDSVSRSSGHFASGLGTVELTVALHYVYNTPFDQLIWDVGHQAYPHKILTGRRDKIGTIRQKGGLHPFPWRGESEYDVLSVGHSSTSISAGIGIAVAAEKEGKDRRTVCVIGDGAITAGMAFEAMNHAGDIRPDMLVILNDNEMSISENVGALNNHLAQLLSGKLYSSLREGGKKVFSGVPPIKELLKRTEEHIKGMVVPGTLFEELGFNYIGPVDGHDVMGLISTLKNMRDLKGPQFLHIMTKKGRGYEPAEKDPITFHAVPKFDPSSGCLPKSSGGLPGYSKIFGDWLCETAAKDSKLMAITPAMREGSGMVEFSRKFPDRYFDVAIAEQHAVTFAAGLAIGGYKPVVAIYSTFLQRAYDQVIHDVAIQKLPVMFAIDRAGIVGADGQTHQGAFDLSYLRCIPDMVIMTPSDENECRQMLFTGYHYNDGPTAVRYPRGNAQGVALTPLEKLPIGKGLVKRHGEKLAILNFGTLMPEAAKVAEALNATLVDMRFVKPLDDTLILEMAAQHDALVTLEENAIMGGAGSGVNEVLMAHRKPVPVLNIGLPDFFIPQGTQEEARAELGLDAAGIEAKIKAWLA.

Thiamine diphosphate is bound by residues histidine 80 and 121–123 (GHS). Aspartate 152 is a binding site for Mg(2+). Thiamine diphosphate is bound by residues 153-154 (GA), asparagine 181, tyrosine 288, and glutamate 370. Asparagine 181 contributes to the Mg(2+) binding site.

The protein belongs to the transketolase family. DXPS subfamily. In terms of assembly, homodimer. The cofactor is Mg(2+). Thiamine diphosphate serves as cofactor.

It carries out the reaction D-glyceraldehyde 3-phosphate + pyruvate + H(+) = 1-deoxy-D-xylulose 5-phosphate + CO2. Its pathway is metabolic intermediate biosynthesis; 1-deoxy-D-xylulose 5-phosphate biosynthesis; 1-deoxy-D-xylulose 5-phosphate from D-glyceraldehyde 3-phosphate and pyruvate: step 1/1. Its function is as follows. Catalyzes the acyloin condensation reaction between C atoms 2 and 3 of pyruvate and glyceraldehyde 3-phosphate to yield 1-deoxy-D-xylulose-5-phosphate (DXP). In Salmonella choleraesuis (strain SC-B67), this protein is 1-deoxy-D-xylulose-5-phosphate synthase.